Here is an 837-residue protein sequence, read N- to C-terminus: MASDVVARTRSSGVTFTPPTTHDMVRSLFDPTVRKSFLEICITLALLSDFVFCYWGLQRFGLTSMKKAFLAQYLFWRLCYNLGIGVALHLQSRYETWTNYAKRNHVFTKGNHTPLARFCQFELKTKMSEGYDMYSQPEELNVWLLFRQFVDLILMQDFCTYMIYVYLSLPAQWSAMLNWRTGLGVSMILFNIWVKVDAHRVVKDYAWYWGDFFFLQESELVFDGVFNISPHPMYSIGYMGYYGLSLICGNYHVLLVSISGHLLQFLFLKYVESPHMEITYGSESSDDNSQINSCIDDLIATKNYDYSRPLINSGFWVNNFDKLRFTDYFTVGTSLALICWLFLERPSVKLLFNLTFFTKFVTSIVVCSILYLQSSQKWFTKLYLKNGYTQVYSYQQWQFIYNFSSCLTYTLLFIQTLAKLFDDNTYIEYTQFIFGLLLCAVQTWCNAEIRSAISDFGWFYGDFFLSNYIPTKSLTSHGIYRYLNNPETILGVAGVWGTVLMTDFSWENIALACLWSGCNFIIVKFIEQPHMAKLYGDNTRVGGIEKTLQGLGPWRRMSELMDRVENVITKSLTNQQEPFDKGLEKPRKDIKSVNNHLRVRTNSQEWEEAVEDAIGNVTSKLYPDCKFEIEDLGEKSFILPRPITIRWQVPIELFDEDAWIGLYNIIQTRSNSKTTKVSSSGHWSAVSPNAYKGYESNNLAVTEFEKNDTVACGKVTFDSSLLHFKPGIYEFRYHAGNSHNVLCTSKPFELLLPNLDMETPEILNKQLLQLLTSVSAVKNGKFDSHGNRYFTTRIFQRLVKDSLGVELSTDYINRVNGDIGAISQRICHIKKVLDDLE.

The Lumenal segment spans residues 1-36 (MASDVVARTRSSGVTFTPPTTHDMVRSLFDPTVRKS). The helical transmembrane segment at 37-57 (FLEICITLALLSDFVFCYWGL) threads the bilayer. Over 58-67 (QRFGLTSMKK) the chain is Cytoplasmic. Residues 68-88 (AFLAQYLFWRLCYNLGIGVAL) traverse the membrane as a helical segment. Topologically, residues 89 to 148 (HLQSRYETWTNYAKRNHVFTKGNHTPLARFCQFELKTKMSEGYDMYSQPEELNVWLLFRQ) are lumenal. A helical transmembrane segment spans residues 149–169 (FVDLILMQDFCTYMIYVYLSL). Residues 170–173 (PAQW) are Cytoplasmic-facing. The helical transmembrane segment at 174-194 (SAMLNWRTGLGVSMILFNIWV) threads the bilayer. Topologically, residues 195–205 (KVDAHRVVKDY) are lumenal. Residues 206-226 (AWYWGDFFFLQESELVFDGVF) form a helical membrane-spanning segment. Topologically, residues 227-235 (NISPHPMYS) are cytoplasmic. Residues 236-256 (IGYMGYYGLSLICGNYHVLLV) traverse the membrane as a helical segment. Over 257-322 (SISGHLLQFL…SGFWVNNFDK (66 aa)) the chain is Lumenal. The chain crosses the membrane as a helical span at residues 323–343 (LRFTDYFTVGTSLALICWLFL). Residues 344 to 349 (ERPSVK) lie on the Cytoplasmic side of the membrane. The helical transmembrane segment at 350-370 (LLFNLTFFTKFVTSIVVCSIL) threads the bilayer. The Lumenal segment spans residues 371–396 (YLQSSQKWFTKLYLKNGYTQVYSYQQ). A helical membrane pass occupies residues 397-417 (WQFIYNFSSCLTYTLLFIQTL). Over 418-424 (AKLFDDN) the chain is Cytoplasmic. A helical transmembrane segment spans residues 425-445 (TYIEYTQFIFGLLLCAVQTWC). The Lumenal portion of the chain corresponds to 446 to 505 (NAEIRSAISDFGWFYGDFFLSNYIPTKSLTSHGIYRYLNNPETILGVAGVWGTVLMTDFS). Residues 506–526 (WENIALACLWSGCNFIIVKFI) traverse the membrane as a helical segment. Topologically, residues 527 to 837 (EQPHMAKLYG…HIKKVLDDLE (311 aa)) are cytoplasmic.

Belongs to the class VI-like SAM-binding methyltransferase superfamily. CHO2 family.

It is found in the endoplasmic reticulum membrane. The catalysed reaction is a 1,2-diacyl-sn-glycero-3-phosphoethanolamine + S-adenosyl-L-methionine = a 1,2-diacyl-sn-glycero-3-phospho-N-methylethanolamine + S-adenosyl-L-homocysteine + H(+). Its pathway is phospholipid metabolism; phosphatidylcholine biosynthesis. Its function is as follows. Catalyzes the first step of the methylation pathway of phosphatidylcholine biosynthesis, the SAM-dependent methylation of phosphatidylethanolamine (PE) to phosphatidylmonomethylethanolamine (PMME). The chain is Phosphatidylethanolamine N-methyltransferase (CHO2) from Zygosaccharomyces rouxii (strain ATCC 2623 / CBS 732 / NBRC 1130 / NCYC 568 / NRRL Y-229).